The primary structure comprises 102 residues: Small ribosomal subunit protein uS10 (102 aa).

The protein belongs to the universal ribosomal protein uS10 family. As to quaternary structure, part of the 30S ribosomal subunit.

Functionally, involved in the binding of tRNA to the ribosomes. The chain is Small ribosomal subunit protein uS10 from Methanocorpusculum labreanum (strain ATCC 43576 / DSM 4855 / Z).